Reading from the N-terminus, the 81-residue chain is Cortexin-2 (81 aa).

Residues 29–49 (TGFAFVGILCIFLGLLIIRCF) traverse the membrane as a helical segment.

The protein belongs to the cortexin family.

Its subcellular location is the membrane. The polypeptide is Cortexin-2 (CTXN2) (Homo sapiens (Human)).